The sequence spans 211 residues: MHRRSSKSYSSRNSKIPERSKIPDCVIASNKSAEYNYFLDKTFEAGLVLLGSEVKSVRQQKISLSEAYIYEDNSEIWLANLYIPEHKTGGWTNHNPRRLRKLLLHKYQIARLRKDLLIPGITLVPIKFYFRNGRAKLLIALARGKKLIDKREVIKEREATLEANRALKHRLRRPRAQRNTQRSVTPRRTRENKNVRGSKARSARRNVRREN.

The segment at 168–211 (KHRLRRPRAQRNTQRSVTPRRTRENKNVRGSKARSARRNVRREN) is disordered. Over residues 177–186 (QRNTQRSVTP) the composition is skewed to polar residues. A compositionally biased stretch (basic residues) spans 196–211 (RGSKARSARRNVRREN).

It belongs to the SmpB family.

Its subcellular location is the cytoplasm. Functionally, required for rescue of stalled ribosomes mediated by trans-translation. Binds to transfer-messenger RNA (tmRNA), required for stable association of tmRNA with ribosomes. tmRNA and SmpB together mimic tRNA shape, replacing the anticodon stem-loop with SmpB. tmRNA is encoded by the ssrA gene; the 2 termini fold to resemble tRNA(Ala) and it encodes a 'tag peptide', a short internal open reading frame. During trans-translation Ala-aminoacylated tmRNA acts like a tRNA, entering the A-site of stalled ribosomes, displacing the stalled mRNA. The ribosome then switches to translate the ORF on the tmRNA; the nascent peptide is terminated with the 'tag peptide' encoded by the tmRNA and targeted for degradation. The ribosome is freed to recommence translation, which seems to be the essential function of trans-translation. The sequence is that of SsrA-binding protein from Tropheryma whipplei (strain Twist) (Whipple's bacillus).